The sequence spans 152 residues: Acidic phospholipase A2 S16-19 (152 aa).

The signal sequence occupies residues 1–19 (MYPAHLLVLLAVCVSLLGA). A propeptide spanning residues 20–27 (SNIPLPSL) is cleaved from the precursor. Intrachain disulfides connect Cys38–Cys104, Cys54–Cys151, Cys71–Cys132, Cys78–Cys125, Cys88–Cys118, and Cys111–Cys123. Ca(2+) contacts are provided by Tyr55, Gly57, and Gly59. The active site involves His75. Asp76 is a binding site for Ca(2+). The active site involves Asp126.

Belongs to the phospholipase A2 family. Group I subfamily. D49 sub-subfamily. It depends on Ca(2+) as a cofactor. This enzyme lacks one of the seven disulfide bonds found in similar PLA2 proteins. As to expression, expressed by the venom gland.

The protein resides in the secreted. It carries out the reaction a 1,2-diacyl-sn-glycero-3-phosphocholine + H2O = a 1-acyl-sn-glycero-3-phosphocholine + a fatty acid + H(+). In terms of biological role, snake venom phospholipase A2 (PLA2) that inhibits collagen-induced platelet aggregation. PLA2 catalyzes the calcium-dependent hydrolysis of the 2-acyl groups in 3-sn-phosphoglycerides. This chain is Acidic phospholipase A2 S16-19, found in Austrelaps superbus (Lowland copperhead snake).